Reading from the N-terminus, the 159-residue chain is Nutritionally-regulated adipose and cardiac-enriched protein homolog (159 aa).

The disordered stretch occupies residues 1 to 67 (MKTAVHALSP…GDEPRRTTRH (67 aa)). 2 stretches are compositionally biased toward basic and acidic residues: residues 12–25 (SRPETQHQTRKNEE) and 50–63 (SPQERCGRGDEPRR). A helical membrane pass occupies residues 107–124 (LTACILLALALGMCCGQA).

Its subcellular location is the cell membrane. This is Nutritionally-regulated adipose and cardiac-enriched protein homolog (NRAC) from Bos taurus (Bovine).